Here is a 37-residue protein sequence, read N- to C-terminus: MKVRPSVKKMCDKCRVIKRHGKIMVICSNPKHKQRQG.

This sequence belongs to the bacterial ribosomal protein bL36 family.

It is found in the plastid. The protein localises to the chloroplast. The polypeptide is Large ribosomal subunit protein bL36c (Phaeodactylum tricornutum (strain CCAP 1055/1)).